The primary structure comprises 159 residues: Ribosomal RNA large subunit methyltransferase H (159 aa).

Positions 76 and 108 each coordinate S-adenosyl-L-methionine.

The protein belongs to the RNA methyltransferase RlmH family. In terms of assembly, homodimer.

It is found in the cytoplasm. It catalyses the reaction pseudouridine(1915) in 23S rRNA + S-adenosyl-L-methionine = N(3)-methylpseudouridine(1915) in 23S rRNA + S-adenosyl-L-homocysteine + H(+). Specifically methylates the pseudouridine at position 1915 (m3Psi1915) in 23S rRNA. The sequence is that of Ribosomal RNA large subunit methyltransferase H from Lactiplantibacillus plantarum (strain ATCC BAA-793 / NCIMB 8826 / WCFS1) (Lactobacillus plantarum).